The primary structure comprises 638 residues: Threonine--tRNA ligase (638 aa).

In terms of domain architecture, TGS spans 1-61; the sequence is MVAITLPDGK…DRDVNLSIIT (61 aa). The interval 244 to 536 is catalytic; sequence DHRRLGREME…LIENFAGRFP (293 aa). The Zn(2+) site is built by Cys-336, His-387, and His-513.

The protein belongs to the class-II aminoacyl-tRNA synthetase family. Homodimer. Requires Zn(2+) as cofactor.

Its subcellular location is the cytoplasm. It carries out the reaction tRNA(Thr) + L-threonine + ATP = L-threonyl-tRNA(Thr) + AMP + diphosphate + H(+). In terms of biological role, catalyzes the attachment of threonine to tRNA(Thr) in a two-step reaction: L-threonine is first activated by ATP to form Thr-AMP and then transferred to the acceptor end of tRNA(Thr). Also edits incorrectly charged L-seryl-tRNA(Thr). This is Threonine--tRNA ligase from Paramagnetospirillum magneticum (strain ATCC 700264 / AMB-1) (Magnetospirillum magneticum).